We begin with the raw amino-acid sequence, 319 residues long: Transaldolase (319 aa).

K132 functions as the Schiff-base intermediate with substrate in the catalytic mechanism.

Belongs to the transaldolase family. Type 1 subfamily. In terms of assembly, homodimer.

It is found in the cytoplasm. The catalysed reaction is D-sedoheptulose 7-phosphate + D-glyceraldehyde 3-phosphate = D-erythrose 4-phosphate + beta-D-fructose 6-phosphate. The protein operates within carbohydrate degradation; pentose phosphate pathway; D-glyceraldehyde 3-phosphate and beta-D-fructose 6-phosphate from D-ribose 5-phosphate and D-xylulose 5-phosphate (non-oxidative stage): step 2/3. In terms of biological role, transaldolase is important for the balance of metabolites in the pentose-phosphate pathway. This Alteromonas mediterranea (strain DSM 17117 / CIP 110805 / LMG 28347 / Deep ecotype) protein is Transaldolase.